Here is a 453-residue protein sequence, read N- to C-terminus: Bis(5'-adenosyl)-triphosphatase ENPP4 (453 aa).

Positions 1–18 (MKLLLMLLFSGLMTGCRG) are cleaved as a signal peptide. Over 19 to 407 (NSSSASPPKL…DQWCINLPEA (389 aa)) the chain is Extracellular. Residues Asp-34 and Thr-70 each coordinate Zn(2+). Thr-70 serves as the catalytic AMP-threonine intermediate. The substrate site is built by Asn-91 and Tyr-154. Residue Asn-166 is glycosylated (N-linked (GlcNAc...) asparagine). Zn(2+)-binding residues include Asp-189, His-193, Asp-237, and His-238. Residue Asp-189 coordinates substrate. A disulfide bond links Cys-254 and Cys-287. N-linked (GlcNAc...) asparagine glycosylation occurs at Asn-276. Zn(2+) is bound at residue His-336. The cysteines at positions 394 and 401 are disulfide-linked. The helical transmembrane segment at 408-428 (IGIVIGALLVLTTLTCLIIIM) threads the bilayer. Residues 429 to 453 (QNRVSGPRPFSRLQLQEDDDDPLIG) are Cytoplasmic-facing.

The protein belongs to the nucleotide pyrophosphatase/phosphodiesterase family. Requires Zn(2+) as cofactor.

The protein localises to the cell membrane. The enzyme catalyses P(1),P(3)-bis(5'-adenosyl) triphosphate + H2O = AMP + ADP + 2 H(+). Functionally, hydrolyzes extracellular Ap3A into AMP and ADP, and Ap4A into AMP and ATP. Ap3A and Ap4A are diadenosine polyphosphates thought to induce proliferation of vascular smooth muscle cells. Acts as a procoagulant, mediating platelet aggregation at the site of nascent thrombus via release of ADP from Ap3A and activation of ADP receptors. This Bos taurus (Bovine) protein is Bis(5'-adenosyl)-triphosphatase ENPP4 (ENPP4).